Reading from the N-terminus, the 534-residue chain is Light-independent protochlorophyllide reductase subunit B (534 aa).

D36 is a [4Fe-4S] cluster binding site. D274 serves as the catalytic Proton donor. G409–L410 contributes to the substrate binding site. The interval D426–D446 is disordered.

It belongs to the ChlB/BchB/BchZ family. Protochlorophyllide reductase is composed of three subunits; BchL, BchN and BchB. Forms a heterotetramer of two BchB and two BchN subunits. [4Fe-4S] cluster is required as a cofactor.

The catalysed reaction is chlorophyllide a + oxidized 2[4Fe-4S]-[ferredoxin] + 2 ADP + 2 phosphate = protochlorophyllide a + reduced 2[4Fe-4S]-[ferredoxin] + 2 ATP + 2 H2O. It participates in porphyrin-containing compound metabolism; bacteriochlorophyll biosynthesis (light-independent). Its function is as follows. Component of the dark-operative protochlorophyllide reductase (DPOR) that uses Mg-ATP and reduced ferredoxin to reduce ring D of protochlorophyllide (Pchlide) to form chlorophyllide a (Chlide). This reaction is light-independent. The NB-protein (BchN-BchB) is the catalytic component of the complex. This chain is Light-independent protochlorophyllide reductase subunit B, found in Cereibacter sphaeroides (strain ATCC 17029 / ATH 2.4.9) (Rhodobacter sphaeroides).